The sequence spans 68 residues: Conotoxin Ar5.3 (68 aa).

The N-terminal stretch at 1 to 19 is a signal peptide; it reads MLCLPVFIILLLLASPAAS. Positions 20 to 53 are excised as a propeptide; it reads NPLEKRIQNDLIRAALEDADMENDPRSIIDSVKT.

The protein belongs to the conotoxin T superfamily. Post-translationally, contains 2 disulfide bonds that can be either 'C1-C3, C2-C4' or 'C1-C4, C2-C3', since these disulfide connectivities have been observed for conotoxins with cysteine framework V (for examples, see AC P0DQQ7 and AC P81755). In terms of tissue distribution, expressed by the venom duct.

It is found in the secreted. In Conus arenatus (Sand-dusted cone), this protein is Conotoxin Ar5.3.